The chain runs to 563 residues: PTS system fructose-specific EIIB'BC component (563 aa).

2 consecutive PTS EIIB type-2 domains span residues 1–85 (MKTL…KGHA) and 104–201 (KRVV…KAVA). Catalysis depends on C112, which acts as the Phosphocysteine intermediate; for EIIB activity. The residue at position 112 (C112) is a Phosphocysteine; by EIIA. One can recognise a PTS EIIC type-2 domain in the interval 226 to 561 (AYRHLLTGVS…KRPEVDAVAK (336 aa)). The next 9 helical transmembrane spans lie at 236-256 (YMLPMVVAGGLCIALSFAFGI), 274-294 (GGSAFALMVPVLAGYIAFSIA), 304-324 (IGGMLAVSTGSGFIGGIIAGF), 349-369 (ILIIPLISSLVVGLAMIYLIG), 382-402 (WLQTMGTANAVLLGAILGGMM), 430-450 (MAAIMAAGMVPPLAMGLATMV), 463-483 (GKAALVLGLCFISEGAIPFAA), 489-509 (VLPCCIVGGALTGAISMAIGA), and 518-538 (LFVLLIPGAITPVLGYLVAII).

It is found in the cell inner membrane. It carries out the reaction D-fructose(out) + N(pros)-phospho-L-histidyl-[protein] = D-fructose 1-phosphate(in) + L-histidyl-[protein]. In terms of biological role, the phosphoenolpyruvate-dependent sugar phosphotransferase system (sugar PTS), a major carbohydrate active transport system, catalyzes the phosphorylation of incoming sugar substrates concomitantly with their translocation across the cell membrane. The enzyme II FruAB PTS system is involved in fructose transport. The polypeptide is PTS system fructose-specific EIIB'BC component (Escherichia coli (strain K12)).